A 1221-amino-acid chain; its full sequence is Putative DNA-directed RNA polymerase II subunit RPB2 homolog (1221 aa).

Composition is skewed to low complexity over residues 1 to 54 (MSRG…SASS) and 692 to 701 (PAPSSSPSDS). 2 disordered regions span residues 1–63 (MSRG…PMSE) and 673–701 (RGSGYDSPPAPEERDIEMDPAPSSSPSDS). Position 823 (Asp-823) interacts with Mg(2+). Cys-1174, Cys-1177, Cys-1187, and Cys-1190 together coordinate Zn(2+). The segment at 1174-1190 (CKECGRISDHFEYCRMC) adopts a C4-type zinc-finger fold.

It belongs to the RNA polymerase beta chain family.

It catalyses the reaction RNA(n) + a ribonucleoside 5'-triphosphate = RNA(n+1) + diphosphate. In terms of biological role, component of the DNA-dependent RNA polymerase that catalyzes the transcription of DNA into RNA using the four ribonucleoside triphosphates as substrates. Second largest component of RNA polymerase II which synthesizes mRNA precursors and many functional non-coding RNAs. Proposed to contribute to the polymerase catalytic activity and forms the polymerase active center together with the largest subunit. This is Putative DNA-directed RNA polymerase II subunit RPB2 homolog from Dryophytes versicolor (chameleon treefrog).